We begin with the raw amino-acid sequence, 362 residues long: Carbamoyl phosphate synthase small chain (362 aa).

The CPSase stretch occupies residues 1-169; it reads MGKRLLILED…TKTAYPAPGV (169 aa). L-glutamine contacts are provided by S46, G220, and G222. The 187-residue stretch at 172 to 358 folds into the Glutamine amidotransferase type-1 domain; sequence NIVLVDFGLK…LELIDAFQLE (187 aa). Catalysis depends on C247, which acts as the Nucleophile. L-glutamine contacts are provided by M248, Q251, N289, G291, and Y292. Residues H331 and D333 contribute to the active site.

It belongs to the CarA family. As to quaternary structure, composed of two chains; the small (or glutamine) chain promotes the hydrolysis of glutamine to ammonia, which is used by the large (or ammonia) chain to synthesize carbamoyl phosphate. Tetramer of heterodimers (alpha,beta)4.

It catalyses the reaction hydrogencarbonate + L-glutamine + 2 ATP + H2O = carbamoyl phosphate + L-glutamate + 2 ADP + phosphate + 2 H(+). The catalysed reaction is L-glutamine + H2O = L-glutamate + NH4(+). Its pathway is amino-acid biosynthesis; L-arginine biosynthesis; carbamoyl phosphate from bicarbonate: step 1/1. It functions in the pathway pyrimidine metabolism; UMP biosynthesis via de novo pathway; (S)-dihydroorotate from bicarbonate: step 1/3. Small subunit of the glutamine-dependent carbamoyl phosphate synthetase (CPSase). CPSase catalyzes the formation of carbamoyl phosphate from the ammonia moiety of glutamine, carbonate, and phosphate donated by ATP, constituting the first step of 2 biosynthetic pathways, one leading to arginine and/or urea and the other to pyrimidine nucleotides. The small subunit (glutamine amidotransferase) binds and cleaves glutamine to supply the large subunit with the substrate ammonia. The protein is Carbamoyl phosphate synthase small chain of Streptococcus mutans serotype c (strain ATCC 700610 / UA159).